The primary structure comprises 436 residues: Cyclin-A2-2 (436 aa).

Belongs to the cyclin family. Cyclin AB subfamily. In terms of tissue distribution, expressed in roots, stems, leaves, flowers and siliques.

This Arabidopsis thaliana (Mouse-ear cress) protein is Cyclin-A2-2 (CYCA2-2).